Reading from the N-terminus, the 261-residue chain is 5'-nucleotidase SurE (261 aa).

4 residues coordinate a divalent metal cation: D8, D9, S39, and N94.

It belongs to the SurE nucleotidase family. Requires a divalent metal cation as cofactor.

The protein localises to the cytoplasm. The enzyme catalyses a ribonucleoside 5'-phosphate + H2O = a ribonucleoside + phosphate. In terms of biological role, nucleotidase that shows phosphatase activity on nucleoside 5'-monophosphates. This is 5'-nucleotidase SurE from Methanopyrus kandleri (strain AV19 / DSM 6324 / JCM 9639 / NBRC 100938).